A 135-amino-acid chain; its full sequence is Large ribosomal subunit protein uL22 (135 aa).

Residues 112 to 135 form a disordered region; the sequence is KKPEKKKLKAKSAKTEEAPKAAEV. The segment covering 124–135 has biased composition (basic and acidic residues); the sequence is AKTEEAPKAAEV.

It belongs to the universal ribosomal protein uL22 family. As to quaternary structure, part of the 50S ribosomal subunit.

This protein binds specifically to 23S rRNA; its binding is stimulated by other ribosomal proteins, e.g. L4, L17, and L20. It is important during the early stages of 50S assembly. It makes multiple contacts with different domains of the 23S rRNA in the assembled 50S subunit and ribosome. Functionally, the globular domain of the protein is located near the polypeptide exit tunnel on the outside of the subunit, while an extended beta-hairpin is found that lines the wall of the exit tunnel in the center of the 70S ribosome. The polypeptide is Large ribosomal subunit protein uL22 (Brachyspira hyodysenteriae (strain ATCC 49526 / WA1)).